Consider the following 647-residue polypeptide: MFQDNPLLAQLKQQLHAQTPRVEGLVKGTDKGFGFLEVDGQKSYFIPPPQMKKVMHGDRIIAAVHTNNDKESAEPEELVEPFLTRFVGRVQKKEGDNRLWIIPDHPLLKDAIPCRPIKSLTHPFADQDWAVAEMRRHPLKGDKHFQAELTDFITDKDDHFAPWWVTLMRHQLERNAPEVDSETLTLHDDLPREDLTALSFVTIDSASTEDMDDALYIRKEENGQLSLYIAIADPTAYIQPNSELDTIAAQRALTNYLPGFNIPMLPRELSDNLCSLRPNEKRPALVCQVGIMEDGALTDEIHFYSAWVESKAKLVYDNISDWLEGEETQWAPENEIVHEQVMLLKEMSEKRHVWREQHALVFKERPDYRFILDDSGNVLDIVAEKRRTANRIVEEAMITANICAAKVLSRNLGFGIYNVHTGFDPLYIDQVSQTLKEHGIETNADELLTLEGFCRLRRELDNQPNQFLDSRIRRFQNFAEIKTEPGPHFGLGLEAYATWTSPIRKYSDILNHRLLKAIISKSAAEKPQDEDCVRIAERRRANRMAERDVGDWLYARFLKPFAGTESTFNAEIIDITRGGIRVRLVENGAIAFIPAPFLHAVRDEIQCSQETGSVIIKGETAYKLNDIIPVRIEDVKLETRNIVARPI.

One can recognise an RNB domain in the interval 192-520 (REDLTALSFV…NHRLLKAIIS (329 aa)). Residues 565–647 (ESTFNAEIID…ETRNIVARPI (83 aa)) form the S1 motif domain.

This sequence belongs to the RNR ribonuclease family. RNase II subfamily.

The protein localises to the cytoplasm. The catalysed reaction is Exonucleolytic cleavage in the 3'- to 5'-direction to yield nucleoside 5'-phosphates.. In terms of biological role, involved in mRNA degradation. Hydrolyzes single-stranded polyribonucleotides processively in the 3' to 5' direction. This is Exoribonuclease 2 from Proteus mirabilis (strain HI4320).